Reading from the N-terminus, the 294-residue chain is NAD kinase (294 aa).

The Proton acceptor role is filled by Asp74. NAD(+) is bound by residues 74–75 (DG), 148–149 (NE), His159, Arg176, Asp178, 189–194 (TAYSLS), and Gln249.

This sequence belongs to the NAD kinase family. A divalent metal cation serves as cofactor.

The protein localises to the cytoplasm. The catalysed reaction is NAD(+) + ATP = ADP + NADP(+) + H(+). Functionally, involved in the regulation of the intracellular balance of NAD and NADP, and is a key enzyme in the biosynthesis of NADP. Catalyzes specifically the phosphorylation on 2'-hydroxyl of the adenosine moiety of NAD to yield NADP. This is NAD kinase from Vibrio campbellii (strain ATCC BAA-1116).